A 3391-amino-acid polypeptide reads, in one-letter code: Genome polyprotein (3391 aa).

The interaction with host EXOC1 stretch occupies residues 1 to 15 (MNNQRKKARNTPFNM). Over 1–101 (MNNQRKKARN…LNILNRRRRT (101 aa)) the chain is Cytoplasmic. The tract at residues 37–72 (MLQGRGPLKLFMALVAFLRFLTIPPTAGILKRWGTI) is hydrophobic; homodimerization of capsid protein C. The propeptide at 101-114 (TAGMIIMLIPTVMA) is ER anchor for the capsid protein C, removed in mature form by serine protease NS3. A helical transmembrane segment spans residues 102–122 (AGMIIMLIPTVMAFHLTTRNG). Residues 123–238 (EPHMIVSRQE…GAWKHAQRIE (116 aa)) are Extracellular-facing. N-linked (GlcNAc...) asparagine; by host glycosylation occurs at N183. The helical transmembrane segment at 239–259 (TWILRHPGFTIMAAILAYTIG) threads the bilayer. The Cytoplasmic segment spans residues 260-265 (TTHFQR). The helical transmembrane segment at 266–280 (ALIFILLTAVAPSMT) threads the bilayer. Over 281–725 (MRCIGISNRD…LHQVFGAIYG (445 aa)) the chain is Extracellular. 4 cysteine pairs are disulfide-bonded: C283–C310, C340–C401, C354–C385, and C372–C396. An N-linked (GlcNAc...) asparagine; by host glycan is attached at N347. The tract at residues 378–391 (DRGWGNGCGLFGKG) is fusion peptide. N433 carries N-linked (GlcNAc...) asparagine; by host glycosylation. 2 disulfide bridges follow: C465-C565 and C582-C613. The helical transmembrane segment at 726–746 (AAFSGVSWIMKILIGVIITWI) threads the bilayer. The Cytoplasmic segment spans residues 747–752 (GMNSRS). The chain crosses the membrane as a helical span at residues 753–773 (TSLSVSLVLVGVVTLYLGVMV). Over 774-1195 (QADSGCVVSW…MVGATMTDDI (422 aa)) the chain is Extracellular. 6 disulfides stabilise this stretch: C779–C790, C830–C918, C954–C998, C1055–C1104, C1066–C1088, and C1087–C1091. Residues N905 and N982 are each glycosylated (N-linked (GlcNAc...) asparagine; by host). Residues 1196–1220 (GMGVTYLALLAAFKVRPTFAAGLLL) form a helical membrane-spanning segment. The Cytoplasmic portion of the chain corresponds to 1221–1226 (RKLTSK). Residues 1227–1245 (ELMMTTIGIVLLSQSTIPE) form a helical membrane-spanning segment. Over 1246–1269 (TILELTDALALGMMVLKMVRKMEK) the chain is Lumenal. The chain crosses the membrane as a helical span at residues 1270–1290 (YQLAVTIMAILCVPNAVILQN). A topological domain (cytoplasmic) is located at residue A1291. Residues 1292 to 1310 (WKVSCTILAVVSVSPLFLT) traverse the membrane as a helical segment. At 1311-1317 (SSQQKAD) the chain is on the lumenal side. A helical transmembrane segment spans residues 1318–1338 (WIPLALTIKGLNPTAIFLTTL). Topologically, residues 1339-1346 (SRTNKKRS) are cytoplasmic. A helical transmembrane segment spans residues 1347–1367 (WPLNEAIMAVGMVSILASSLL). Topologically, residues 1368-1370 (KND) are lumenal. A helical transmembrane segment spans residues 1371–1391 (IPMTGPLVAGGLLTVCYVLTG). Topologically, residues 1392-1447 (RSADLELERAADVKWEDQAEISGSSPILSITISEDGSMSIKNEEEEQTLTILIRTG) are cytoplasmic. The tract at residues 1398 to 1437 (LERAADVKWEDQAEISGSSPILSITISEDGSMSIKNEEEE) is interacts with and activates NS3 protease. Positions 1448–1468 (LLVISGLFPVSIPITAAAWYL) form an intramembrane region, helical. Residues 1469-2147 (WEVKKQRAGV…LSELPETLET (679 aa)) lie on the Cytoplasmic side of the membrane. A Peptidase S7 domain is found at 1476–1653 (AGVLWDVPSP…EKSIEDNPEI (178 aa)). Catalysis depends on charge relay system; for serine protease NS3 activity residues H1526, D1550, and S1610. A Helicase ATP-binding domain is found at 1655–1811 (DDIFRKRKLT…QSNAPIMDEE (157 aa)). The important for RNA-binding stretch occupies residues 1659–1662 (RKRK). Residue 1668-1675 (LHPGAGKT) coordinates ATP. The DEAH box signature appears at 1759–1762 (DEAH). The Helicase C-terminal domain occupies 1821 to 1988 (SGHEWVTDFK…IIPSMFEPER (168 aa)). The residue at position 1863 (K1863) is an N6-acetyllysine; by host. A helical transmembrane segment spans residues 2148-2168 (LLLLTLLATVTGGIFLFLMSG). Topologically, residues 2169–2170 (RG) are lumenal. The helical intramembrane region spans 2171–2191 (IGKMTLGMCCIITASILLWYA). Q2192 is a topological domain (lumenal). A helical membrane pass occupies residues 2193-2213 (IQPHWIAASIILEFFLIVLLI). Topologically, residues 2214–2228 (PEPEKQRTPQDNQLT) are cytoplasmic. Residues 2229 to 2249 (YVVIAILTVVAATMANEMGFL) form a helical membrane-spanning segment. The Lumenal portion of the chain corresponds to 2250 to 2274 (EKTKKDLGLGSITTQQPESNILDID). The segment at residues 2275–2295 (LRPASAWTLYAVATTFVTPML) is an intramembrane region (helical). Residues 2296 to 2316 (RHSIENSSVNVSLTAIANQAT) lie on the Lumenal side of the membrane. N-linked (GlcNAc...) asparagine; by host glycosylation is found at N2301 and N2305. Positions 2317–2337 (VLMGLGKGWPLSKMDIGVPLL) form an intramembrane region, helical. Residues 2338–2347 (AIGCYSQVNP) lie on the Lumenal side of the membrane. Residues 2348–2368 (ITLTAALFLLVAHYAIIGPGL) form a helical membrane-spanning segment. Over 2369-2413 (QAKATREAQKRAAAGIMKNPTVDGITVIDLDPIPYDPKFEKQLGQ) the chain is Cytoplasmic. A helical membrane pass occupies residues 2414–2434 (VMLLVLCVTQVLMMRTTWALC). Topologically, residues 2435 to 2459 (EALTLATGPISTLWEGNPGRFWNTT) are lumenal. A glycan (N-linked (GlcNAc...) asparagine; by host) is linked at N2457. The helical transmembrane segment at 2460–2480 (IAVSMANIFRGSYLAGAGLLF) threads the bilayer. Over 2481–3391 (SIMKNTTNTR…KEEEEAGVLW (911 aa)) the chain is Cytoplasmic. The region spanning 2493 to 2755 (TGNIGETLGE…DVDLGSGTRN (263 aa)) is the mRNA cap 0-1 NS5-type MT domain. An S-adenosyl-L-methionine-binding site is contributed by S2547. A Phosphoserine modification is found at S2547. The For 2'-O-MTase activity role is filled by K2552. The SUMO-interacting motif signature appears at 2568 to 2571 (VVDL). Residues G2577, W2578, T2595, K2596, D2622, and V2623 each coordinate S-adenosyl-L-methionine. The active-site For 2'-O-MTase activity is the D2637. Residue I2638 coordinates S-adenosyl-L-methionine. Active-site for 2'-O-MTase activity residues include K2672 and E2708. Y2710 serves as a coordination point for S-adenosyl-L-methionine. The Zn(2+) site is built by E2929, H2933, C2938, and C2941. The region spanning 3019–3168 (GAMYADDTAG…KPLDDRFASA (150 aa)) is the RdRp catalytic domain. H3203, C3219, and C3338 together coordinate Zn(2+).

It in the N-terminal section; belongs to the class I-like SAM-binding methyltransferase superfamily. mRNA cap 0-1 NS5-type methyltransferase family. As to quaternary structure, homodimer. Interacts (via N-terminus) with host EXOC1 (via C-terminus); this interaction results in EXOC1 degradation through the proteasome degradation pathway. Forms heterodimers with envelope protein E in the endoplasmic reticulum and Golgi. In terms of assembly, homodimer; in the endoplasmic reticulum and Golgi. Interacts with protein prM. Interacts with non-structural protein 1. As to quaternary structure, homodimer; Homohexamer when secreted. Interacts with envelope protein E. Interacts with host PRKAA1. Interacts (via N-terminus) with serine protease NS3. In terms of assembly, forms a heterodimer with serine protease NS3. May form homooligomers. As to quaternary structure, forms a heterodimer with NS2B. Interacts with NS4B. Interacts with unphosphorylated RNA-directed RNA polymerase NS5; this interaction stimulates RNA-directed RNA polymerase NS5 guanylyltransferase activity. Interacts with host SHFL. Interacts with host MAVS; this interaction inhibits the synthesis of IFN-beta. Interacts with host MAVS; this interaction inhibits the synthesis of IFN-beta. Interacts with host SHFL. Interacts with host AUP1; the interaction occurs in the presence of Dengue virus NS4B and induces lipophagy which facilitates production of virus progeny particles. May interact with host SRPRA and SEC61G. In terms of assembly, interacts with serine protease NS. As to quaternary structure, homodimer. Interacts with host STAT2; this interaction inhibits the phosphorylation of the latter, and, when all viral proteins are present (polyprotein), targets STAT2 for degradation. Interacts with serine protease NS3. Interacts with host PAF1 complex; the interaction may prevent the recruitment of the PAF1 complex to interferon-responsive genes, and thus reduces the immune response. Specific enzymatic cleavages in vivo yield mature proteins. Cleavages in the lumen of endoplasmic reticulum are performed by host signal peptidase, whereas cleavages in the cytoplasmic side are performed by serine protease NS3. Signal cleavage at the 2K-4B site requires a prior NS3 protease-mediated cleavage at the 4A-2K site. In terms of processing, cleaved in post-Golgi vesicles by a host furin, releasing the mature small envelope protein M, and peptide pr. This cleavage is incomplete as up to 30% of viral particles still carry uncleaved prM. Post-translationally, N-glycosylated. N-glycosylated. The excreted form is glycosylated and this is required for efficient secretion of the protein from infected cells. In terms of processing, acetylated by host KAT5. Acetylation modulates NS3 RNA-binding and unwinding activities and plays an important positive role for viral replication. Post-translationally, sumoylation of RNA-directed RNA polymerase NS5 increases NS5 protein stability allowing proper viral RNA replication. Phosphorylated on serines residues. This phosphorylation may trigger NS5 nuclear localization.

It localises to the virion. It is found in the host nucleus. The protein resides in the host cytoplasm. The protein localises to the host perinuclear region. Its subcellular location is the secreted. It localises to the virion membrane. It is found in the host endoplasmic reticulum membrane. The protein resides in the host mitochondrion. The catalysed reaction is Selective hydrolysis of -Xaa-Xaa-|-Yaa- bonds in which each of the Xaa can be either Arg or Lys and Yaa can be either Ser or Ala.. It carries out the reaction RNA(n) + a ribonucleoside 5'-triphosphate = RNA(n+1) + diphosphate. It catalyses the reaction a ribonucleoside 5'-triphosphate + H2O = a ribonucleoside 5'-diphosphate + phosphate + H(+). The enzyme catalyses ATP + H2O = ADP + phosphate + H(+). The catalysed reaction is a 5'-end (5'-triphosphoguanosine)-ribonucleoside in mRNA + S-adenosyl-L-methionine = a 5'-end (N(7)-methyl 5'-triphosphoguanosine)-ribonucleoside in mRNA + S-adenosyl-L-homocysteine. It carries out the reaction a 5'-end (N(7)-methyl 5'-triphosphoguanosine)-ribonucleoside in mRNA + S-adenosyl-L-methionine = a 5'-end (N(7)-methyl 5'-triphosphoguanosine)-(2'-O-methyl-ribonucleoside) in mRNA + S-adenosyl-L-homocysteine + H(+). In terms of biological role, plays a role in virus budding by binding to the cell membrane and gathering the viral RNA into a nucleocapsid that forms the core of a mature virus particle. During virus entry, may induce genome penetration into the host cytoplasm after hemifusion induced by the surface proteins. Can migrate to the cell nucleus where it modulates host functions. Overcomes the anti-viral effects of host EXOC1 by sequestering and degrading the latter through the proteasome degradation pathway. Functionally, inhibits RNA silencing by interfering with host Dicer. Prevents premature fusion activity of envelope proteins in trans-Golgi by binding to envelope protein E at pH6.0. After virion release in extracellular space, gets dissociated from E dimers. Its function is as follows. Acts as a chaperone for envelope protein E during intracellular virion assembly by masking and inactivating envelope protein E fusion peptide. prM is the only viral peptide matured by host furin in the trans-Golgi network probably to avoid catastrophic activation of the viral fusion activity in acidic Golgi compartment prior to virion release. prM-E cleavage is inefficient, and many virions are only partially matured. These uncleaved prM would play a role in immune evasion. In terms of biological role, may play a role in virus budding. Exerts cytotoxic effects by activating a mitochondrial apoptotic pathway through M ectodomain. May display a viroporin activity. Functionally, binds to host cell surface receptor and mediates fusion between viral and cellular membranes. Envelope protein is synthesized in the endoplasmic reticulum in the form of heterodimer with protein prM. They play a role in virion budding in the ER, and the newly formed immature particle is covered with 60 spikes composed of heterodimer between precursor prM and envelope protein E. The virion is transported to the Golgi apparatus where the low pH causes dissociation of PrM-E heterodimers and formation of E homodimers. prM-E cleavage is inefficient, and many virions are only partially matured. These uncleaved prM would play a role in immune evasion. Involved in immune evasion, pathogenesis and viral replication. Once cleaved off the polyprotein, is targeted to three destinations: the viral replication cycle, the plasma membrane and the extracellular compartment. Essential for viral replication. Required for formation of the replication complex and recruitment of other non-structural proteins to the ER-derived membrane structures. Excreted as a hexameric lipoparticle that plays a role against host immune response. Antagonizing the complement function. Binds to the host macrophages and dendritic cells. Inhibits signal transduction originating from Toll-like receptor 3 (TLR3). Mediates complement activation, which may contribute to the pathogenesis of the vascular leakage that occurs in severe dengue disease. Activates autophagy through the AMPK/ERK/mTOR signaling pathway. Mechanistically, acts as the assembly platform for STK11-AMPK interactions and promotes STK11-AMPK interactions. In turn, promotes phosphorylation of the AMPK kinase structural domain and activates AMPK, thereby positively regulating the AMPK/ERK/mTOR signaling pathway and inducing autophagy. Its function is as follows. Disrupts the host endothelial glycocalyx layer of host pulmonary microvascular endothelial cells, inducing degradation of sialic acid and shedding of heparan sulfate proteoglycans. NS1 induces expression of sialidases, heparanase, and activates cathepsin L, which activates heparanase via enzymatic cleavage. These effects are probably linked to the endothelial hyperpermeability observed in severe dengue disease. In terms of biological role, component of the viral RNA replication complex that functions in virion assembly and antagonizes the host immune response. Functionally, required cofactor for the serine protease function of NS3. May have membrane-destabilizing activity and form viroporins. Displays three enzymatic activities: serine protease, NTPase and RNA helicase. NS3 serine protease, in association with NS2B, performs its autocleavage and cleaves the polyprotein at dibasic sites in the cytoplasm: C-prM, NS2A-NS2B, NS2B-NS3, NS3-NS4A, NS4A-2K and NS4B-NS5. NS3 RNA helicase binds RNA and unwinds dsRNA in the 3' to 5' direction. Its function is as follows. Regulates the ATPase activity of the NS3 helicase activity. NS4A allows NS3 helicase to conserve energy during unwinding. Plays a role in the inhibition of the host innate immune response. Interacts with host MAVS and thereby prevents the interaction between RIGI and MAVS. In turn, IFN-beta production is impaired. Interacts with host AUP1 which mediates induction of lipophagy in host cells and facilitates production of virus progeny particles. In terms of biological role, functions as a signal peptide for NS4B and is required for the interferon antagonism activity of the latter. Functionally, induces the formation of ER-derived membrane vesicles where the viral replication takes place. Inhibits interferon (IFN)-induced host STAT1 phosphorylation and nuclear translocation, thereby preventing the establishment of cellular antiviral state by blocking the IFN-alpha/beta pathway. Replicates the viral (+) and (-) RNA genome, and performs the capping of genomes in the cytoplasm. NS5 methylates viral RNA cap at guanine N-7 and ribose 2'-O positions. Besides its role in RNA genome replication, also prevents the establishment of cellular antiviral state by blocking the interferon-alpha/beta (IFN-alpha/beta) signaling pathway. Inhibits host TYK2 and STAT2 phosphorylation, thereby preventing activation of JAK-STAT signaling pathway. May reduce immune responses by preventing the recruitment of the host PAF1 complex to interferon-responsive genes. This is Genome polyprotein from Aedimorphus (Red guenon).